The sequence spans 248 residues: ATP synthase subunit a, chloroplastic (248 aa).

5 consecutive transmembrane segments (helical) span residues 35–55 (GQVF…SFLG), 94–114 (VPYI…GALI), 133–153 (INTT…AGLS), 202–222 (VFTL…GLFA), and 224–244 (SIQA…AMEG).

Belongs to the ATPase A chain family. F-type ATPases have 2 components, CF(1) - the catalytic core - and CF(0) - the membrane proton channel. CF(1) has five subunits: alpha(3), beta(3), gamma(1), delta(1), epsilon(1). CF(0) has four main subunits: a, b, b' and c.

The protein resides in the plastid. It localises to the chloroplast thylakoid membrane. In terms of biological role, key component of the proton channel; it plays a direct role in the translocation of protons across the membrane. In Porphyra purpurea (Red seaweed), this protein is ATP synthase subunit a, chloroplastic.